The following is a 330-amino-acid chain: Ketol-acid reductoisomerase (NADP(+)) (330 aa).

The region spanning 1–182 (MAVVYYDQDA…GATRAGVIET (182 aa)) is the KARI N-terminal Rossmann domain. Residues 25 to 28 (YGSQ), Arg-48, Ser-51, Ser-53, and 83 to 86 (DETQ) each bind NADP(+). His-108 is a catalytic residue. Gly-134 is a binding site for NADP(+). Residues 183-328 (TFKEETETDL…DQLREMMSWL (146 aa)) enclose the KARI C-terminal knotted domain. The Mg(2+) site is built by Asp-191, Glu-195, Glu-227, and Glu-231. Ser-252 is a substrate binding site.

Belongs to the ketol-acid reductoisomerase family. It depends on Mg(2+) as a cofactor.

It carries out the reaction (2R)-2,3-dihydroxy-3-methylbutanoate + NADP(+) = (2S)-2-acetolactate + NADPH + H(+). The enzyme catalyses (2R,3R)-2,3-dihydroxy-3-methylpentanoate + NADP(+) = (S)-2-ethyl-2-hydroxy-3-oxobutanoate + NADPH + H(+). It functions in the pathway amino-acid biosynthesis; L-isoleucine biosynthesis; L-isoleucine from 2-oxobutanoate: step 2/4. It participates in amino-acid biosynthesis; L-valine biosynthesis; L-valine from pyruvate: step 2/4. In terms of biological role, involved in the biosynthesis of branched-chain amino acids (BCAA). Catalyzes an alkyl-migration followed by a ketol-acid reduction of (S)-2-acetolactate (S2AL) to yield (R)-2,3-dihydroxy-isovalerate. In the isomerase reaction, S2AL is rearranged via a Mg-dependent methyl migration to produce 3-hydroxy-3-methyl-2-ketobutyrate (HMKB). In the reductase reaction, this 2-ketoacid undergoes a metal-dependent reduction by NADPH to yield (R)-2,3-dihydroxy-isovalerate. This chain is Ketol-acid reductoisomerase (NADP(+)), found in Moorella thermoacetica (strain ATCC 39073 / JCM 9320).